A 371-amino-acid polypeptide reads, in one-letter code: Queuine tRNA-ribosyltransferase (371 aa).

Residue aspartate 90 is the Proton acceptor of the active site. Substrate is bound by residues aspartate 90–phenylalanine 94, aspartate 144, glutamine 189, and glycine 215. The segment at glycine 246–asparagine 252 is RNA binding. Residue aspartate 265 is the Nucleophile of the active site. Positions threonine 270–arginine 274 are RNA binding; important for wobble base 34 recognition. 4 residues coordinate Zn(2+): cysteine 303, cysteine 305, cysteine 308, and histidine 334.

This sequence belongs to the queuine tRNA-ribosyltransferase family. In terms of assembly, homodimer. Within each dimer, one monomer is responsible for RNA recognition and catalysis, while the other monomer binds to the replacement base PreQ1. The cofactor is Zn(2+).

It carries out the reaction 7-aminomethyl-7-carbaguanine + guanosine(34) in tRNA = 7-aminomethyl-7-carbaguanosine(34) in tRNA + guanine. The protein operates within tRNA modification; tRNA-queuosine biosynthesis. Its function is as follows. Catalyzes the base-exchange of a guanine (G) residue with the queuine precursor 7-aminomethyl-7-deazaguanine (PreQ1) at position 34 (anticodon wobble position) in tRNAs with GU(N) anticodons (tRNA-Asp, -Asn, -His and -Tyr). Catalysis occurs through a double-displacement mechanism. The nucleophile active site attacks the C1' of nucleotide 34 to detach the guanine base from the RNA, forming a covalent enzyme-RNA intermediate. The proton acceptor active site deprotonates the incoming PreQ1, allowing a nucleophilic attack on the C1' of the ribose to form the product. After dissociation, two additional enzymatic reactions on the tRNA convert PreQ1 to queuine (Q), resulting in the hypermodified nucleoside queuosine (7-(((4,5-cis-dihydroxy-2-cyclopenten-1-yl)amino)methyl)-7-deazaguanosine). The sequence is that of Queuine tRNA-ribosyltransferase from Helicobacter pylori (strain Shi470).